The following is a 1007-amino-acid chain: Retinoblastoma-related protein (1007 aa).

Residues 406–604 (TPVTTAMTTA…EKGSSMYNSL (199 aa)) form a domain A region. A pocket region spans residues 406–856 (TPVTTAMTTA…NEIFIPAVKP (451 aa)). A spacer region spans residues 605–725 (IVARAALSAE…PGREGETCAE (121 aa)). The disordered stretch occupies residues 644 to 665 (PVPSLQKRESSPGQNGDIRSPK). Residues 726–856 (TGINIFFSKI…NEIFIPAVKP (131 aa)) form a domain B region.

Belongs to the retinoblastoma protein (RB) family.

The protein resides in the nucleus. Its function is as follows. Regulator of biological processes that recruits a histone deacetylase to control gene transcription. May play a role in the entry into mitosis, negatively regulating the cell proliferation. Formation of stable complexes with geminiviridae replication-associated proteins may create a cellular environment which favors viral DNA replication. The polypeptide is Retinoblastoma-related protein (RBR) (Vitis vinifera (Grape)).